The primary structure comprises 311 residues: Metal-staphylopine import system permease protein CntB (311 aa).

Transmembrane regions (helical) follow at residues 9 to 29 (IALMFPLVIVVSFMTFLLTYI), 105 to 125 (LTIISSVMVMITSIILGVVSA), 139 to 159 (VAFFLTALPSYWIASILIIYV), 173 to 193 (GPESYILPVIVITIAYAGIYF), 237 to 257 (IFCMSIPMIMGGLVVIEYIFA), and 274 to 294 (FPVIQAYVLIVAVLFIVFNTL). The ABC transmembrane type-1 domain occupies 99–295 (FMNTLKLTII…VLFIVFNTLA (197 aa)).

Belongs to the binding-protein-dependent transport system permease family. As to quaternary structure, the complex is composed of two ATP-binding proteins (CntD and CntF), two transmembrane proteins (CntB and CntC) and a solute-binding protein (CntA).

The protein localises to the cell membrane. In terms of biological role, part of the ABC transporter complex CntABCDF (Opp1) involved in the uptake of metal in complex with the metallophore staphylopine (StP). May be involved in the import of a large array of divalent metals ions such as nickel, cobalt, zinc, copper and iron. Probably responsible for the translocation of the substrate across the membrane. This is Metal-staphylopine import system permease protein CntB from Staphylococcus aureus (strain Mu50 / ATCC 700699).